We begin with the raw amino-acid sequence, 380 residues long: Cobalt-precorrin-5B C(1)-methyltransferase (380 aa).

The protein belongs to the CbiD family.

It catalyses the reaction Co-precorrin-5B + S-adenosyl-L-methionine = Co-precorrin-6A + S-adenosyl-L-homocysteine. Its pathway is cofactor biosynthesis; adenosylcobalamin biosynthesis; cob(II)yrinate a,c-diamide from sirohydrochlorin (anaerobic route): step 6/10. Its function is as follows. Catalyzes the methylation of C-1 in cobalt-precorrin-5B to form cobalt-precorrin-6A. The protein is Cobalt-precorrin-5B C(1)-methyltransferase of Methanosphaera stadtmanae (strain ATCC 43021 / DSM 3091 / JCM 11832 / MCB-3).